Reading from the N-terminus, the 109-residue chain is MKVLVLFSVLFLTLFSYSSTEAIDELDSDAEEDMLSLMANEQVRAKACTPRLHDCSHDRHSCCRGELFKDVCYCFYPEGEDKTEVCSCQQPKSHKYIEKVVDKAKTVVG.

The N-terminal stretch at 1–22 is a signal peptide; sequence MKVLVLFSVLFLTLFSYSSTEA. The propeptide occupies 23-44; sequence IDELDSDAEEDMLSLMANEQVR. The knottin domain stretch occupies residues 45–88; the sequence is AKACTPRLHDCSHDRHSCCRGELFKDVCYCFYPEGEDKTEVCSC. 4 disulfides stabilise this stretch: Cys-48-Cys-63, Cys-55-Cys-72, Cys-62-Cys-88, and Cys-74-Cys-86. Residues 89-108 are linear cationic cytotoxin domain; that stretch reads QQPKSHKYIEKVVDKAKTVV.

This sequence belongs to the neurotoxin 19 (CSTX) family. 05 (U4-Lctx) subfamily. Expressed by the venom gland.

The protein localises to the secreted. Its function is as follows. Enhances the high-affinity desensitization of human P2RX3 purinoceptors. The polypeptide is U4-lycotoxin-Ls1a (Lycosa singoriensis (Wolf spider)).